A 716-amino-acid chain; its full sequence is Probable calcium-binding mitochondrial carrier K02F3.2 (716 aa).

The interval 1-345 is N-terminal domain; the sequence is MSFDHLLTSS…CLKDIQAIDP (345 aa). 4 EF-hand domains span residues 93-121, 127-162, 165-195, and 198-233; these read YNKETVRLLASAADTTKDGDISFEEFCAF, SPDALYLTAFELFDRNASDTISCDEFEAVIRHTQPL, QDFDFSSEFIKRYFGADKQRNVNYHSFCQLL, and FYEEQGIQAFKRYDKNGNGTISSLDFQQIMTTVKGH. Positions 106, 108, 110, 117, 140, 142, 144, 146, and 151 each coordinate Ca(2+). The Ca(2+) site is built by aspartate 211, asparagine 213, asparagine 215, threonine 217, and aspartate 222. The tract at residues 346–362 is linker loop domain; it reads ERLKRVSQMDRLINIKA. Residues 372–664 form a carrier domain region; that stretch reads GTAFLESAYR…RLFYVDFAGS (293 aa). Solcar repeat units lie at residues 376 to 468, 475 to 560, and 568 to 656; these read LESA…MRDK, IPLY…AKLA, and NSPG…LQRL. Transmembrane regions (helical) follow at residues 382-399, 443-462, 485-498, 535-554, 574-591, and 631-650; these read FLLGSVAGACGATAVYPI, GLLPQIVGVAPEKAIKLTMN, GTGGMCQVVFTNPL, GSRACFLRDIPFSAIYFPAY, FASAFIAGVPAAGLVTPA, and GTAARVCRSSPQFAVTLLTY. Positions 665 to 716 are C-terminal domain; it reads RPTGSELATTKTIQDESSTNPDHVGGYKLAAATFSGIEHKFGLFLPKFETSK.

This sequence belongs to the mitochondrial carrier (TC 2.A.29) family. Homodimer (via N-terminus).

It is found in the mitochondrion inner membrane. In terms of biological role, mitochondrial and calcium-binding carrier that catalyzes the calcium-dependent exchange of cytoplasmic glutamate with mitochondrial aspartate across the mitochondrial inner membrane. The chain is Probable calcium-binding mitochondrial carrier K02F3.2 from Caenorhabditis elegans.